The chain runs to 483 residues: Glutamate--tRNA ligase (483 aa).

The short motif at 14–24 is the 'HIGH' region element; it reads PSPTGDPHVGT. The short motif at 253 to 257 is the 'KMSKS' region element; the sequence is KISKR. K256 serves as a coordination point for ATP.

This sequence belongs to the class-I aminoacyl-tRNA synthetase family. Glutamate--tRNA ligase type 1 subfamily. Monomer.

It localises to the cytoplasm. It catalyses the reaction tRNA(Glu) + L-glutamate + ATP = L-glutamyl-tRNA(Glu) + AMP + diphosphate. In terms of biological role, catalyzes the attachment of glutamate to tRNA(Glu) in a two-step reaction: glutamate is first activated by ATP to form Glu-AMP and then transferred to the acceptor end of tRNA(Glu). The polypeptide is Glutamate--tRNA ligase (Deinococcus radiodurans (strain ATCC 13939 / DSM 20539 / JCM 16871 / CCUG 27074 / LMG 4051 / NBRC 15346 / NCIMB 9279 / VKM B-1422 / R1)).